We begin with the raw amino-acid sequence, 325 residues long: MAQFNKNQLIACRRNGTTTSDFNQTEVAEFFLMGFSNSWDIQIVHAALFFLVYLAAVIGNLLIIILTTLDVHLQTPMYFFLRNLSFLDFCYISVTIPKSIVSSLTHDTSISFFGCALQAFFFMDLATTEVAILTVMSYDRYMAICRPLHYEVIINQGVCLRMMAMSWLSGVICGFMHVIATFSLPFCGRNRIRQFFCNIPQLLSLLDPKVITIEIGVMVFGTSLVIISFVVITLSYMYIFSVIMRIPSKEGRSKTFSTCIPHLVVVTLFMISGSIAYVKPISNSPPVLDVFLSAFYTVVPPTLNPVIYSLRNRDMKAALRRQCGP.

The Extracellular segment spans residues 1-43 (MAQFNKNQLIACRRNGTTTSDFNQTEVAEFFLMGFSNSWDIQI). A helical transmembrane segment spans residues 44–64 (VHAALFFLVYLAAVIGNLLII). The Cytoplasmic segment spans residues 65-72 (ILTTLDVH). A helical transmembrane segment spans residues 73 to 93 (LQTPMYFFLRNLSFLDFCYIS). Topologically, residues 94–117 (VTIPKSIVSSLTHDTSISFFGCAL) are extracellular. Residues 118 to 138 (QAFFFMDLATTEVAILTVMSY) traverse the membrane as a helical segment. Over 139–151 (DRYMAICRPLHYE) the chain is Cytoplasmic. A helical transmembrane segment spans residues 152 to 172 (VIINQGVCLRMMAMSWLSGVI). Over 173–214 (CGFMHVIATFSLPFCGRNRIRQFFCNIPQLLSLLDPKVITIE) the chain is Extracellular. The chain crosses the membrane as a helical span at residues 215 to 235 (IGVMVFGTSLVIISFVVITLS). Residues 236-255 (YMYIFSVIMRIPSKEGRSKT) are Cytoplasmic-facing. A helical transmembrane segment spans residues 256–276 (FSTCIPHLVVVTLFMISGSIA). The Extracellular segment spans residues 277 to 289 (YVKPISNSPPVLD). Residues 290–310 (VFLSAFYTVVPPTLNPVIYSL) traverse the membrane as a helical segment. Over 311–325 (RNRDMKAALRRQCGP) the chain is Cytoplasmic.

Belongs to the G-protein coupled receptor 1 family.

It localises to the cell membrane. Functionally, odorant receptor. This is Olfactory receptor 14L1 from Homo sapiens (Human).